The chain runs to 432 residues: SVP1-like protein 2 (432 aa).

2 WD repeats span residues 223–263 (AHKS…LLYE) and 268–307 (LDRA…TSSG).

The protein belongs to the WD repeat PROPPIN family.

The protein localises to the vacuole membrane. The protein resides in the cytoplasmic vesicle membrane. Its function is as follows. Involved in mitochondrial or peroxisomal functions and amino acid signaling pathways. This is SVP1-like protein 2 (HSV2) from Debaryomyces hansenii (strain ATCC 36239 / CBS 767 / BCRC 21394 / JCM 1990 / NBRC 0083 / IGC 2968) (Yeast).